A 2525-amino-acid chain; its full sequence is Highly reducing polyketide synthase cm3B (2525 aa).

Residues 1–10 show a composition bias toward polar residues; sequence MQSDTNNSPL. The tract at residues 1 to 29 is disordered; it reads MQSDTNNSPLSWEELRSGAASSDANSSPP. The Ketosynthase family 3 (KS3) domain maps to 29-450; the sequence is PEPIAIIGMS…GTNAHVVVDA (422 aa). Catalysis depends on for beta-ketoacyl synthase activity residues C202, H336, and H376. Residues 560 to 895 are malonyl-CoA:ACP transacylase (MAT) domain; sequence VFSGQGSQYA…FLECLGALHV (336 aa). The segment at 949 to 1087 is N-terminal hotdog fold; that stretch reads HELLGTFAHD…GLVHAETQAA (139 aa). Residues 949 to 1252 are dehydratase (DH) domain; sequence HELLGTFAHD…AKGVHTTTLP (304 aa). The PKS/mFAS DH domain maps to 949–1257; sequence HELLGTFAHD…TTTLPGDTGL (309 aa). H981 functions as the Proton acceptor; for dehydratase activity in the catalytic mechanism. Residues 1107–1257 are C-terminal hotdog fold; sequence VHEVTPQKLY…TTTLPGDTGL (151 aa). The active-site Proton donor; for dehydratase activity is the D1169. Positions 1399 to 1504 are methyltransferase (CMet) domain; sequence LEVGAGTASA…KKLLKPGGKF (106 aa). The enoyl reductase (ER) domain stretch occupies residues 1799–2111; sequence GLLESIRWKD…AGKHTGKIVL (313 aa). Positions 2411–2489 constitute a Carrier domain; sequence AQLLENISQL…ELAKIIAKES (79 aa). Positions 2411–2489 are ketoreductase (KR) domain; the sequence is AQLLENISQL…ELAKIIAKES (79 aa). S2449 is subject to O-(pantetheine 4'-phosphoryl)serine.

It participates in secondary metabolite biosynthesis. Its function is as follows. Highly reducing polyketide synthase; part of the gene cluster that mediates the biosynthesis of beauveriolides I and III, cyclodepsipeptides acting as inhibitors of the acyl-CoA:cholesterol acyltransferase. The HR-PKS cm3B initiates the biosynthesis of beauveriolides by iteratively catalyzing the formation of the linear polyketide chain. The ATP-dependent acetyl-CoA ligase cm3D converts the polyketide carboxylic acid to a CoA thioester which id shuttled to the first T domain in the NRPS cm3A by the acetyltransferase cm3C. Cm3A contains 13 domains and assembles the polyketide chain, L-phenylalanine, L-alanine, and D-leucine (or D-allo-isoleucine) to form beauveriolide I (or beauveriolide III). The production of both beauveriolides I and III suggests the substrate adaptability of cm3B, using different amino acids as substrates. The protein is Highly reducing polyketide synthase cm3B of Cordyceps militaris (strain CM01) (Caterpillar fungus).